Reading from the N-terminus, the 496-residue chain is N-succinylglutamate 5-semialdehyde dehydrogenase (496 aa).

An NAD(+)-binding site is contributed by 229–234 (GSYATG). Active-site residues include glutamate 252 and cysteine 286.

Belongs to the aldehyde dehydrogenase family. AstD subfamily.

It catalyses the reaction N-succinyl-L-glutamate 5-semialdehyde + NAD(+) + H2O = N-succinyl-L-glutamate + NADH + 2 H(+). Its pathway is amino-acid degradation; L-arginine degradation via AST pathway; L-glutamate and succinate from L-arginine: step 4/5. Catalyzes the NAD-dependent reduction of succinylglutamate semialdehyde into succinylglutamate. This is N-succinylglutamate 5-semialdehyde dehydrogenase from Legionella pneumophila subsp. pneumophila (strain Philadelphia 1 / ATCC 33152 / DSM 7513).